Consider the following 310-residue polypeptide: D-alanine--D-alanine ligase (310 aa).

The ATP-grasp domain maps to 107 to 302 (KQAFQAARLT…FEDLVERILA (196 aa)). 135–188 (EFSLPVVVKPSQEGSSVGVSIVKKESEFAAAMKEAFRYDREILVEQFIKGSEVQ) is an ATP binding site. Residues D256, E269, and N271 each coordinate Mg(2+).

Belongs to the D-alanine--D-alanine ligase family. Mg(2+) is required as a cofactor. Mn(2+) serves as cofactor.

It is found in the cytoplasm. It carries out the reaction 2 D-alanine + ATP = D-alanyl-D-alanine + ADP + phosphate + H(+). It functions in the pathway cell wall biogenesis; peptidoglycan biosynthesis. Functionally, cell wall formation. The protein is D-alanine--D-alanine ligase of Geotalea uraniireducens (strain Rf4) (Geobacter uraniireducens).